We begin with the raw amino-acid sequence, 505 residues long: Histidine ammonia-lyase (505 aa).

The 5-imidazolinone (Ala-Gly) cross-link spans 141–143 (ASG). Serine 142 bears the 2,3-didehydroalanine (Ser) mark.

This sequence belongs to the PAL/histidase family. In terms of processing, contains an active site 4-methylidene-imidazol-5-one (MIO), which is formed autocatalytically by cyclization and dehydration of residues Ala-Ser-Gly.

Its subcellular location is the cytoplasm. The catalysed reaction is L-histidine = trans-urocanate + NH4(+). It functions in the pathway amino-acid degradation; L-histidine degradation into L-glutamate; N-formimidoyl-L-glutamate from L-histidine: step 1/3. The polypeptide is Histidine ammonia-lyase (Bacillus cereus (strain G9842)).